Reading from the N-terminus, the 683-residue chain is Elongation factor G 1 (683 aa).

The tr-type G domain occupies 3 to 278 (DKMRNIGIMA…AVVDFLPAPN (276 aa)). GTP-binding positions include 12-19 (AHIDAGKT), 76-80 (DTPGH), and 130-133 (NKMD).

This sequence belongs to the TRAFAC class translation factor GTPase superfamily. Classic translation factor GTPase family. EF-G/EF-2 subfamily.

The protein resides in the cytoplasm. Catalyzes the GTP-dependent ribosomal translocation step during translation elongation. During this step, the ribosome changes from the pre-translocational (PRE) to the post-translocational (POST) state as the newly formed A-site-bound peptidyl-tRNA and P-site-bound deacylated tRNA move to the P and E sites, respectively. Catalyzes the coordinated movement of the two tRNA molecules, the mRNA and conformational changes in the ribosome. This chain is Elongation factor G 1, found in Treponema denticola (strain ATCC 35405 / DSM 14222 / CIP 103919 / JCM 8153 / KCTC 15104).